Consider the following 1241-residue polypeptide: DNA-directed RNA polymerase subunit beta (1241 aa).

It belongs to the RNA polymerase beta chain family. The RNAP catalytic core consists of 2 alpha, 1 beta, 1 beta' and 1 omega subunit. When a sigma factor is associated with the core the holoenzyme is formed, which can initiate transcription.

The catalysed reaction is RNA(n) + a ribonucleoside 5'-triphosphate = RNA(n+1) + diphosphate. Functionally, DNA-dependent RNA polymerase catalyzes the transcription of DNA into RNA using the four ribonucleoside triphosphates as substrates. This Clostridium botulinum (strain Alaska E43 / Type E3) protein is DNA-directed RNA polymerase subunit beta.